Reading from the N-terminus, the 209-residue chain is UPF0319 protein VFMJ11_1730 (209 aa).

Positions 1-21 (MKIQSIFAASFCLLSSISAHA) are cleaved as a signal peptide.

Belongs to the UPF0319 family.

This Aliivibrio fischeri (strain MJ11) (Vibrio fischeri) protein is UPF0319 protein VFMJ11_1730.